We begin with the raw amino-acid sequence, 1029 residues long: Ig-like and fibronectin type-III domain-containing protein 1 (1029 aa).

The signal sequence occupies residues 1 to 22; it reads MCNVAEDPSSFSTITIATTCRA. Residues 23–918 are Extracellular-facing; it reads EWPKVSPCIA…RRSASKGSSS (896 aa). 4 N-linked (GlcNAc...) asparagine glycosylation sites follow: Asn-36, Asn-93, Asn-120, and Asn-165. The 92-residue stretch at 90–181 folds into the Fibronectin type-III 1 domain; it reads APGNVTISEL…TAKLFSTLPT (92 aa). A WR1 domain is found at 185-227; the sequence is PLCTIGEPIYMNDGRVMICDAVNPCPNGFRCTGAGSDLSYCCP. Residues Asn-257, Asn-374, Asn-409, Asn-442, Asn-482, Asn-507, and Asn-552 are each glycosylated (N-linked (GlcNAc...) asparagine). Fibronectin type-III domains are found at residues 330–417 and 427–523; these read AVRN…TKPA and APEK…AQKD. Residues 619-710 enclose the Ig-like C2-type domain; the sequence is ASVTMKKDKI…SRVEASSEVI (92 aa). Residues Cys-640 and Cys-693 are joined by a disulfide bond. N-linked (GlcNAc...) asparagine glycosylation is present at Asn-753. One can recognise a Fibronectin type-III 4 domain in the interval 817–909; the sequence is APSEVSNVRI…SAIPKDSEPR (93 aa). The helical transmembrane segment at 919–939 threads the bilayer; sequence AFWIVVILVVFGVLIAGLAVL. The Cytoplasmic segment spans residues 940–1029; sequence SKRRELPYPI…NGMRYAKLET (90 aa). A disordered region spans residues 988-1021; that stretch reads SATTGTAAATQSEWQSANLEANSTTDNSHEYRNG. Residues 998–1013 show a composition bias toward polar residues; sequence QSEWQSANLEANSTTD.

The protein localises to the cell membrane. The chain is Ig-like and fibronectin type-III domain-containing protein 1 from Caenorhabditis elegans.